A 345-amino-acid polypeptide reads, in one-letter code: Selenide, water dikinase (345 aa).

The active site involves cysteine 15. Residues lysine 18 and serine 46–aspartate 48 contribute to the ATP site. Residue aspartate 49 participates in Mg(2+) binding. Residues aspartate 66, aspartate 89, and glycine 137–serine 139 each bind ATP. Aspartate 89 is a Mg(2+) binding site. Aspartate 225 lines the Mg(2+) pocket.

It belongs to the selenophosphate synthase 1 family. Class I subfamily. Homodimer. It depends on Mg(2+) as a cofactor.

The enzyme catalyses hydrogenselenide + ATP + H2O = selenophosphate + AMP + phosphate + 2 H(+). Synthesizes selenophosphate from selenide and ATP. This is Selenide, water dikinase from Aeromonas salmonicida (strain A449).